The primary structure comprises 492 residues: Glycosyltransferase alg8 (492 aa).

Helical transmembrane passes span G13–V32, I47–V69, L379–V401, and P421–F443.

This sequence belongs to the glycosyltransferase 2 family.

The protein localises to the cell membrane. It functions in the pathway glycan biosynthesis; alginate biosynthesis. Possibly a processive enzyme that polymerizes GDP-mannuronic acid. This chain is Glycosyltransferase alg8 (alg8), found in Azotobacter vinelandii.